The following is a 499-amino-acid chain: Diacylglycerol kinase 1 (499 aa).

The DAGKc domain maps to 41 to 194 (APCCPVVVFI…IDSWHIIMRM (154 aa)). A disordered region spans residues 442-479 (PCKSKSVNDPSSPMCCSNHDDDERNSLEDEDEWEEGRK). The segment covering 446-456 (KSVNDPSSPMC) has biased composition (polar residues). The segment covering 459–468 (NHDDDERNSL) has biased composition (basic and acidic residues).

The protein belongs to the eukaryotic diacylglycerol kinase family. In terms of assembly, monomer. Highly expressed in roots.

It carries out the reaction a 1,2-diacyl-sn-glycerol + ATP = a 1,2-diacyl-sn-glycero-3-phosphate + ADP + H(+). In terms of biological role, phosphorylates the second messenger diacylglycerol (DAG) to generate phosphatidic acid (PA), another important signaling molecule. PA is required for plant development and responses to abiotic stress. May play a role in disease resistance responses to pathogen attack. Modulates root architecture by regulating the ratio of DAG and PA, which have opposite effect on the promotion or suppression of lateral roots vs seminal roots. Suppresses lateral root number, but promotes seminal root and crown root thickness. The polypeptide is Diacylglycerol kinase 1 (Oryza sativa subsp. japonica (Rice)).